The sequence spans 83 residues: Defensin-1 (83 aa).

An N-terminal signal peptide occupies residues 1–33; sequence MAGKGVGSRLSTLFLLVLLVITIGMMQVQVAEG. 4 disulfides stabilise this stretch: Cys-36–Cys-82, Cys-47–Cys-67, Cys-53–Cys-76, and Cys-57–Cys-78.

The protein belongs to the DEFL family.

Its subcellular location is the secreted. Plant defense peptide. Has antifungal activity against B.cinera, F.oxysporum, F.solani and H.annosum with IC(50) values of 0.4 ug/ml, 2.9 ug/ml, 0.9 ug/ml and 1.4 ug/ml, respectively. Has modest antifungal activity against C.albicans and T.reesei. Causes thickening of F.oxysporum hyphae and an increase in their branching. Lacks antibacterial activity against the Gram-negative bacteria E.coli and E.carotovora. In Pinus sylvestris (Scotch pine), this protein is Defensin-1.